Reading from the N-terminus, the 126-residue chain is 3-isopropylmalate dehydrogenase (126 aa).

Residues Asp14 and Asp18 each contribute to the Mg(2+) site. 48–60 serves as a coordination point for NAD(+); it reads GSAPDIAGKNIAN.

This sequence belongs to the isocitrate and isopropylmalate dehydrogenases family. LeuB type 1 subfamily. Homodimer. Requires Mg(2+) as cofactor. The cofactor is Mn(2+).

It is found in the cytoplasm. The catalysed reaction is (2R,3S)-3-isopropylmalate + NAD(+) = 4-methyl-2-oxopentanoate + CO2 + NADH. It participates in amino-acid biosynthesis; L-leucine biosynthesis; L-leucine from 3-methyl-2-oxobutanoate: step 3/4. Catalyzes the oxidation of 3-carboxy-2-hydroxy-4-methylpentanoate (3-isopropylmalate) to 3-carboxy-4-methyl-2-oxopentanoate. The product decarboxylates to 4-methyl-2 oxopentanoate. The sequence is that of 3-isopropylmalate dehydrogenase (leuB) from Buchnera aphidicola subsp. Uroleucon rurale.